Reading from the N-terminus, the 452-residue chain is MLPLRCSWSFARANYSTKKELVTRYSGDFPEKLLNRKQKVPTHMYIANSEAAARINQYLEPHFQSSGCDTVMELNSGAGYFTRHLLDRESQFRRIILLESMDHFMPKIQELHTLYPERVKVRQGDFVNLWKLVYMDKMDGGSRVADLLSDVPQKAFTDDINMLVFGAVGSYPFFKHLINSLIFQTSLFNLGRCEMILAMPPPIYIHLTCNNEIGYLIYRSTSVLFQILFEHKFIAKVPREDFLPQQMAYSPTKSSKLGKVQSINPEYLYLVKFTPRRNLHELCQSQDLPALWFFIKQNYVSRRNRIIPNLEKWVPGCGPRLIINPKSSESVTPIYPDELPKKLPQYSCQSTTMSTRNYYPGINIYTQFGDLLPSQILTLFSQFRQWPEYGESSFLASLENALLKLETANDEPNLEDGVTLPEEDDAEADEIIEEESPVPATTPVKRRRKASS.

S-adenosyl-L-methionine contacts are provided by I46, E99, and D125. Residues 408 to 452 form a disordered region; the sequence is ANDEPNLEDGVTLPEEDDAEADEIIEEESPVPATTPVKRRRKASS. Acidic residues predominate over residues 421–436; the sequence is PEEDDAEADEIIEEES.

This sequence belongs to the class I-like SAM-binding methyltransferase superfamily. rRNA adenine N(6)-methyltransferase family. KsgA subfamily.

The protein resides in the mitochondrion. Probable S-adenosyl-L-methionine-dependent methyltransferase which specifically dimethylates mitochondrial 12S rRNA at the conserved stem loop. Also required for basal transcription of mitochondrial DNA. Also regulates mitochondrial DNA copy number. Stimulates transcription independently of the methyltransferase activity. The chain is Dimethyladenosine transferase 2, mitochondrial (mtTFB2) from Drosophila melanogaster (Fruit fly).